The following is a 216-amino-acid chain: 3-isopropylmalate dehydratase small subunit (216 aa).

This sequence belongs to the LeuD family. LeuD type 1 subfamily. As to quaternary structure, heterodimer of LeuC and LeuD.

It catalyses the reaction (2R,3S)-3-isopropylmalate = (2S)-2-isopropylmalate. It functions in the pathway amino-acid biosynthesis; L-leucine biosynthesis; L-leucine from 3-methyl-2-oxobutanoate: step 2/4. In terms of biological role, catalyzes the isomerization between 2-isopropylmalate and 3-isopropylmalate, via the formation of 2-isopropylmaleate. The polypeptide is 3-isopropylmalate dehydratase small subunit (Polaromonas naphthalenivorans (strain CJ2)).